Here is a 334-residue protein sequence, read N- to C-terminus: Dihydroorotate dehydrogenase (quinone) (334 aa).

Residues 59-63 (AGLDK) and Thr-83 contribute to the FMN site. Lys-63 contributes to the substrate binding site. Residue 108 to 112 (NRMGF) coordinates substrate. The FMN site is built by Asn-136 and Asn-169. Asn-169 serves as a coordination point for substrate. The Nucleophile role is filled by Ser-172. Substrate is bound at residue Asn-174. Residues Lys-214 and Thr-242 each contribute to the FMN site. Position 243–244 (243–244 (NT)) interacts with substrate. Residues Gly-265, Gly-294, and 315–316 (YS) each bind FMN.

This sequence belongs to the dihydroorotate dehydrogenase family. Type 2 subfamily. In terms of assembly, monomer. The cofactor is FMN.

The protein resides in the cell membrane. It carries out the reaction (S)-dihydroorotate + a quinone = orotate + a quinol. It functions in the pathway pyrimidine metabolism; UMP biosynthesis via de novo pathway; orotate from (S)-dihydroorotate (quinone route): step 1/1. Functionally, catalyzes the conversion of dihydroorotate to orotate with quinone as electron acceptor. This Acinetobacter baumannii (strain AB0057) protein is Dihydroorotate dehydrogenase (quinone).